We begin with the raw amino-acid sequence, 330 residues long: Peroxidase 70 (330 aa).

An N-terminal signal peptide occupies residues 1–24 (MRSFTNLNPCYVLLPFFLVLATNA). 4 disulfides stabilise this stretch: cysteine 43-cysteine 119, cysteine 76-cysteine 81, cysteine 125-cysteine 326, and cysteine 202-cysteine 234. Histidine 74 (proton acceptor) is an active-site residue. The Ca(2+) site is built by aspartate 75, valine 78, glycine 80, aspartate 82, and serine 84. Proline 165 lines the substrate pocket. Histidine 195 contacts heme b. Position 196 (threonine 196) interacts with Ca(2+). Ca(2+) contacts are provided by aspartate 247, serine 250, and aspartate 255.

It belongs to the peroxidase family. Classical plant (class III) peroxidase subfamily. Heme b serves as cofactor. It depends on Ca(2+) as a cofactor.

Its subcellular location is the secreted. It catalyses the reaction 2 a phenolic donor + H2O2 = 2 a phenolic radical donor + 2 H2O. Its function is as follows. Removal of H(2)O(2), oxidation of toxic reductants, biosynthesis and degradation of lignin, suberization, auxin catabolism, response to environmental stresses such as wounding, pathogen attack and oxidative stress. These functions might be dependent on each isozyme/isoform in each plant tissue. The chain is Peroxidase 70 (PER70) from Arabidopsis thaliana (Mouse-ear cress).